The sequence spans 219 residues: Proteasome subunit beta type-9 (219 aa).

Residues 1 to 20 (MLRAGAPTAGSFRTKEVHTG) constitute a propeptide, removed in mature form. Catalysis depends on T21, which acts as the Nucleophile. Residues K53 and K109 each carry the N6-acetyllysine modification.

The protein belongs to the peptidase T1B family. The 26S proteasome consists of a 20S proteasome core and two 19S regulatory subunits. The 20S proteasome core is composed of 28 subunits that are arranged in four stacked rings, resulting in a barrel-shaped structure. The two end rings are each formed by seven alpha subunits, and the two central rings are each formed by seven beta subunits. The catalytic chamber with the active sites is on the inside of the barrel. Component of the immunoproteasome, where it displaces the equivalent housekeeping subunit PSMB6. Component of the spermatoproteasome, a form of the proteasome specifically found in testis. Post-translationally, autocleaved. The resulting N-terminal Thr residue of the mature subunit is responsible for the nucleophile proteolytic activity.

The protein localises to the cytoplasm. It localises to the nucleus. The catalysed reaction is Cleavage of peptide bonds with very broad specificity.. Functionally, the proteasome is a multicatalytic proteinase complex which is characterized by its ability to cleave peptides with Arg, Phe, Tyr, Leu, and Glu adjacent to the leaving group at neutral or slightly basic pH. The proteasome has an ATP-dependent proteolytic activity. This subunit is involved in antigen processing to generate class I binding peptides. The chain is Proteasome subunit beta type-9 (Psmb9) from Mus platythrix (Flat-haired mouse).